Reading from the N-terminus, the 639-residue chain is Probable serine/threonine-protein kinase DDB_G0282777 (639 aa).

Positions 7 to 122 form a coiled coil; sequence LKENKESLKD…EDLKSIILTS (116 aa). The region spanning 233 to 588 is the Protein kinase domain; sequence MHMVGDIKKG…SNNNQNHTNI (356 aa). Residues 239–247 and lysine 284 each bind ATP; that span reads IKKGSISSD. Aspartate 439 serves as the catalytic Proton acceptor. Positions 601–639 are disordered; that stretch reads NTLETSTTNPNTNTTTSDTNTSTTSTTNTNTTTSNTITA.

The protein belongs to the protein kinase superfamily. Ser/Thr protein kinase family.

It catalyses the reaction L-seryl-[protein] + ATP = O-phospho-L-seryl-[protein] + ADP + H(+). It carries out the reaction L-threonyl-[protein] + ATP = O-phospho-L-threonyl-[protein] + ADP + H(+). In Dictyostelium discoideum (Social amoeba), this protein is Probable serine/threonine-protein kinase DDB_G0282777.